We begin with the raw amino-acid sequence, 203 residues long: Guanylate kinase (203 aa).

The 179-residue stretch at 3–181 (GTLYIVAAPS…AVSEMCAIFT (179 aa)) folds into the Guanylate kinase-like domain. Residue 10 to 17 (APSGAGKS) coordinates ATP.

Belongs to the guanylate kinase family.

The protein resides in the cytoplasm. The enzyme catalyses GMP + ATP = GDP + ADP. Its function is as follows. Essential for recycling GMP and indirectly, cGMP. The sequence is that of Guanylate kinase from Xanthomonas axonopodis pv. citri (strain 306).